Consider the following 143-residue polypeptide: MFLGTYTPKLDDKGRLTLPAKFRDELTGGLVVTKGQDHSLAVYPKEEFAARARKAAAVSRTSPEARAFIRNLAASADEQRPDAQGRITLSVGHRSYAGLTRECVVIGSVDFLEIWDAQAWATYQEETEAAFAAAEDDVLDGFL.

SpoVT-AbrB domains follow at residues 5–47 and 76–119; these read TYTP…PKEE and ADEQ…DAQA.

The protein belongs to the MraZ family. As to quaternary structure, forms oligomers.

It localises to the cytoplasm. The protein localises to the nucleoid. In Corynebacterium efficiens (strain DSM 44549 / YS-314 / AJ 12310 / JCM 11189 / NBRC 100395), this protein is Transcriptional regulator MraZ.